The chain runs to 250 residues: Ureidoacrylate amidohydrolase RutB (250 aa).

Asp-44 functions as the Proton acceptor in the catalytic mechanism. Lys-153 is a catalytic residue. Cys-186 (nucleophile) is an active-site residue.

Belongs to the isochorismatase family. RutB subfamily.

It catalyses the reaction (Z)-3-ureidoacrylate + H2O + H(+) = (Z)-3-aminoacrylate + NH4(+) + CO2. The enzyme catalyses (Z)-3-ureidoacrylate + H2O = (Z)-3-aminoacrylate + carbamate + H(+). The catalysed reaction is (Z)-2-methylureidoacrylate + H2O + H(+) = (Z)-2-methylaminoacrylate + NH4(+) + CO2. Its function is as follows. Hydrolyzes ureidoacrylate to form aminoacrylate and carbamate. The carbamate hydrolyzes spontaneously, thereby releasing one of the nitrogen atoms of the pyrimidine ring as ammonia and one of its carbon atoms as CO2. The protein is Ureidoacrylate amidohydrolase RutB of Pantoea ananatis (strain LMG 20103).